A 162-amino-acid polypeptide reads, in one-letter code: Sorting nexin-3 (162 aa).

An N-acetylalanine modification is found at alanine 2. Residues 27–151 form the PX domain; the sequence is NFLEIDVSNP…HMFLQDEIID (125 aa). Omega-N-methylarginine is present on arginine 43. 4 residues coordinate a 1,2-diacyl-sn-glycero-3-phospho-(1D-myo-inositol-3-phosphate): arginine 70, serine 72, lysine 95, and arginine 118. Serine 72 carries the phosphoserine modification. Lysine 95 is covalently cross-linked (Glycyl lysine isopeptide (Lys-Gly) (interchain with G-Cter in SUMO2)). The binds predominantly to PtdIns(P5) and weaker to PtdIns(P3) abd PtdIns(P4); involved in neurite outgrowth regulation stretch occupies residues 147–162; it reads DEIIDKSYTPSKIRHA.

Belongs to the sorting nexin family. As to quaternary structure, interacts with VPS26A, VPS29 and VPS35; the interaction with VPS35 is direct. The association with the retromer CSC subcomplex subunits is proposed to represent a functional distinct retromer variant described as SNX3-retromer complex. Interacts with USP10 and SCNN1A. Interacts with TRFC. Interacts with SNX8; 2 molecules of SNX8 seems to associate with one molecule of SNX3. Interacts with PTPRU. Interacts with MON2 and DOP1B. Ubiquitinated, leading to its proteasomal degradation. Deubiquitinated by USP10.

The protein localises to the early endosome. Its subcellular location is the cytoplasmic vesicle. It localises to the phagosome. Phosphoinositide-binding protein required for multivesicular body formation. Specifically binds phosphatidylinositol 3-phosphate (PtdIns(P3)). Can also bind phosphatidylinositol 4-phosphate (PtdIns(P4)), phosphatidylinositol 5-phosphate (PtdIns(P5)) and phosphatidylinositol 3,5-biphosphate (PtdIns(3,5)P2). Plays a role in protein transport between cellular compartments. Together with RAB7A facilitates endosome membrane association of the retromer cargo-selective subcomplex (CSC/VPS). May in part act as component of the SNX3-retromer complex which mediates the retrograde endosome-to-TGN transport of WLS distinct from the SNX-BAR retromer pathway. Promotes stability and cell surface expression of epithelial sodium channel (ENAC) subunits SCNN1A and SCNN1G. Not involved in EGFR degradation. Involved in the regulation of phagocytosis in dendritic cells possibly by regulating EEA1 recruitment to the nascent phagosomes. Involved in iron homeostasis through regulation of endocytic recycling of the transferrin receptor TFRC presumably by delivering the transferrin:transferrin receptor complex to recycling endosomes; the function may involve the CSC retromer subcomplex. In the case of Salmonella enterica infection plays arole in maturation of the Salmonella-containing vacuole (SCV) and promotes recruitment of LAMP1 to SCVs. The chain is Sorting nexin-3 from Homo sapiens (Human).